A 593-amino-acid polypeptide reads, in one-letter code: Polyphenol oxidase, chloroplastic (593 aa).

Low complexity predominate over residues 1–13 (MTSLSPPVVTTPT). A disordered region spans residues 1–34 (MTSLSPPVVTTPTVPNPATKPLSPFSQNNSQVSL). Residues 1–89 (MTSLSPPVVT…GMGTDPFAFA (89 aa)) constitute a chloroplast transit peptide. Over residues 24–34 (PFSQNNSQVSL) the composition is skewed to polar residues. Disulfide bonds link Cys100/Cys115 and Cys114/Cys176. 6 residues coordinate Cu cation: His175, His196, His205, His327, His331, and His361. A cross-link (2'-(S-cysteinyl)-histidine (Cys-His)) is located at residues 179–196 (CDGAYDQVGFPELELQIH).

It belongs to the tyrosinase family. Requires Cu(2+) as cofactor.

It localises to the plastid. It is found in the chloroplast thylakoid lumen. The enzyme catalyses 2 catechol + O2 = 2 1,2-benzoquinone + 2 H2O. Catalyzes the oxidation of mono- and o-diphenols to o-diquinones. The sequence is that of Polyphenol oxidase, chloroplastic from Malus domestica (Apple).